The primary structure comprises 504 residues: Anaerobic nitric oxide reductase transcription regulator NorR (504 aa).

Position 57 is a 4-aspartylphosphate (Asp-57). One can recognise a Sigma-54 factor interaction domain in the interval 187–416 (MIGLSPGMTQ…LEHAIHRAVV (230 aa)). Residues 215–222 (GETGTGKE) and 278–287 (ADNGTLFLDE) each bind ATP. A DNA-binding region (H-T-H motif) is located at residues 479–498 (WAACARMLETDVANLHRLAK).

The protein operates within nitrogen metabolism; nitric oxide reduction. Functionally, required for the expression of anaerobic nitric oxide (NO) reductase, acts as a transcriptional activator for at least the norVW operon. Activation also requires sigma-54. In Escherichia coli O9:H4 (strain HS), this protein is Anaerobic nitric oxide reductase transcription regulator NorR.